The primary structure comprises 377 residues: N-acetyldiaminopimelate deacetylase (377 aa).

Residue Asp-70 is part of the active site. The active-site Proton acceptor is the Glu-129.

It belongs to the peptidase M20A family. N-acetyldiaminopimelate deacetylase subfamily.

It catalyses the reaction N-acetyl-(2S,6S)-2,6-diaminopimelate + H2O = (2S,6S)-2,6-diaminopimelate + acetate. The protein operates within amino-acid biosynthesis; L-lysine biosynthesis via DAP pathway; LL-2,6-diaminopimelate from (S)-tetrahydrodipicolinate (acetylase route): step 3/3. Catalyzes the conversion of N-acetyl-diaminopimelate to diaminopimelate and acetate. In Streptococcus thermophilus (strain ATCC BAA-491 / LMD-9), this protein is N-acetyldiaminopimelate deacetylase.